A 367-amino-acid chain; its full sequence is Molybdopterin synthase catalytic subunit (367 aa).

Substrate-binding positions include H101–R102, K117, and K124–E126. The interval R325–A350 is disordered.

The protein belongs to the MoaE family. MOCS2B subfamily. In terms of assembly, heterotetramer; composed of 2 small (Mocs2A) and 2 large (Mocs2B) subunits. Component of the Ada2a-containing (ATAC) complex composed of at least Ada2a, Atac1, Hcf, Ada3, Gcn5, Mocs2B, Charac-14, Atac3, Atac2, NC2beta and wds.

It localises to the cytoplasm. Its subcellular location is the nucleus. The catalysed reaction is 2 [molybdopterin-synthase sulfur-carrier protein]-C-terminal-Gly-aminoethanethioate + cyclic pyranopterin phosphate + H2O = molybdopterin + 2 [molybdopterin-synthase sulfur-carrier protein]-C-terminal Gly-Gly + 2 H(+). It functions in the pathway cofactor biosynthesis; molybdopterin biosynthesis. Functionally, catalytic subunit of the molybdopterin synthase complex, a complex that catalyzes the conversion of precursor Z into molybdopterin. Acts by mediating the incorporation of 2 sulfur atoms from thiocarboxylated Mocs2A into precursor Z to generate a dithiolene group. Involved during biosynthesis of the molybdenum cofactor. The chain is Molybdopterin synthase catalytic subunit from Drosophila melanogaster (Fruit fly).